The chain runs to 83 residues: Cell division topological specificity factor (83 aa).

This sequence belongs to the MinE family.

Its function is as follows. Prevents the cell division inhibition by proteins MinC and MinD at internal division sites while permitting inhibition at polar sites. This ensures cell division at the proper site by restricting the formation of a division septum at the midpoint of the long axis of the cell. The protein is Cell division topological specificity factor of Pseudoalteromonas atlantica (strain T6c / ATCC BAA-1087).